The following is a 532-amino-acid chain: Phosphoenolpyruvate carboxykinase (ATP) (532 aa).

Arginine 60, tyrosine 194, and lysine 200 together coordinate substrate. ATP contacts are provided by residues lysine 200, histidine 219, and 237 to 245; that span reads GLSGTGKTT. Lysine 200 and histidine 219 together coordinate Mn(2+). Residue aspartate 258 participates in Mn(2+) binding. ATP-binding residues include glutamate 286, arginine 324, and threonine 449. Position 324 (arginine 324) interacts with substrate.

Belongs to the phosphoenolpyruvate carboxykinase (ATP) family. It depends on Mn(2+) as a cofactor.

It is found in the cytoplasm. The catalysed reaction is oxaloacetate + ATP = phosphoenolpyruvate + ADP + CO2. It functions in the pathway carbohydrate biosynthesis; gluconeogenesis. Functionally, involved in the gluconeogenesis. Catalyzes the conversion of oxaloacetate (OAA) to phosphoenolpyruvate (PEP) through direct phosphoryl transfer between the nucleoside triphosphate and OAA. In Cereibacter sphaeroides (strain ATCC 17025 / ATH 2.4.3) (Rhodobacter sphaeroides), this protein is Phosphoenolpyruvate carboxykinase (ATP).